Here is a 43-residue protein sequence, read N- to C-terminus: Photosystem II reaction center protein K (43 aa).

The propeptide occupies 1–6; that stretch reads MSLLLA. Residues 18-38 traverse the membrane as a helical segment; the sequence is IVDVLPIIPVLFLLLAFVWQA.

This sequence belongs to the PsbK family. As to quaternary structure, PSII is composed of 1 copy each of membrane proteins PsbA, PsbB, PsbC, PsbD, PsbE, PsbF, PsbH, PsbI, PsbJ, PsbK, PsbL, PsbM, PsbT, PsbX, PsbY, PsbZ, Psb30/Ycf12, at least 3 peripheral proteins of the oxygen-evolving complex and a large number of cofactors. It forms dimeric complexes.

It is found in the plastid. The protein resides in the chloroplast thylakoid membrane. Functionally, one of the components of the core complex of photosystem II (PSII). PSII is a light-driven water:plastoquinone oxidoreductase that uses light energy to abstract electrons from H(2)O, generating O(2) and a proton gradient subsequently used for ATP formation. It consists of a core antenna complex that captures photons, and an electron transfer chain that converts photonic excitation into a charge separation. This Oltmannsiellopsis viridis (Marine flagellate) protein is Photosystem II reaction center protein K.